We begin with the raw amino-acid sequence, 445 residues long: MREILHIQGGQCGNQIGAKFWEVICDEHGVDNTGKYNGDSDLQLERINVYYNEASGGRYVPRAVLMDLEPGTMDSVRSGPFGQIFRPDNFVFGQSGAGNNWAKGHYTEGAELIDSVLDVVRKEAENCDCLQGFQVCHSLGGGTGSGMGTLLISKIREEYPDRMMLTFSVFPSPKVSDTVVEPYNATLSVHQLVENADECMVLDNEALYDICFRTLKLATPTFGDLNHLISATMSGVTCCLRFPGQLNSDLRKLAVNLIPFPRLHFFMVGFAPLTSRGSQQYRALTVPELTQQMWDAKNMMCAADPRHGRYLTACAMFRGKMSTKEVDEQMINVQNKNSSYFVEWIPNNVKSSVCDIPPKGLKMASTFIGNSTSIQEMFRRVSEQFTAMFRRKAFLHWYTGEGMDEMEFTEAESDMNDLVAEYQQYQDATADDEYEEGEEEEEEAA.

The GTP site is built by glutamine 11, glutamate 69, serine 138, glycine 142, threonine 143, glycine 144, asparagine 204, and asparagine 226. Residue glutamate 69 participates in Mg(2+) binding. A disordered region spans residues 420–445 (AEYQQYQDATADDEYEEGEEEEEEAA). Residues 429-445 (TADDEYEEGEEEEEEAA) show a composition bias toward acidic residues.

Belongs to the tubulin family. As to quaternary structure, dimer of alpha and beta chains. A typical microtubule is a hollow water-filled tube with an outer diameter of 25 nm and an inner diameter of 15 nM. Alpha-beta heterodimers associate head-to-tail to form protofilaments running lengthwise along the microtubule wall with the beta-tubulin subunit facing the microtubule plus end conferring a structural polarity. Microtubules usually have 13 protofilaments but different protofilament numbers can be found in some organisms and specialized cells. It depends on Mg(2+) as a cofactor.

It is found in the cytoplasm. It localises to the cytoskeleton. Its function is as follows. Tubulin is the major constituent of microtubules, a cylinder consisting of laterally associated linear protofilaments composed of alpha- and beta-tubulin heterodimers. Microtubules grow by the addition of GTP-tubulin dimers to the microtubule end, where a stabilizing cap forms. Below the cap, tubulin dimers are in GDP-bound state, owing to GTPase activity of alpha-tubulin. The protein is Tubulin beta-5 chain of Gossypium hirsutum (Upland cotton).